A 625-amino-acid chain; its full sequence is Adenine deaminase 2 (625 aa).

It belongs to the metallo-dependent hydrolases superfamily. Adenine deaminase family. The cofactor is Mn(2+).

The enzyme catalyses adenine + H2O + H(+) = hypoxanthine + NH4(+). The protein is Adenine deaminase 2 of Bradyrhizobium diazoefficiens (strain JCM 10833 / BCRC 13528 / IAM 13628 / NBRC 14792 / USDA 110).